The sequence spans 404 residues: Probable tRNA sulfurtransferase (404 aa).

The THUMP domain occupies 61–166; it reads QTLVTGLPKI…HDATYMMAQV (106 aa). ATP contacts are provided by residues 184-185, 209-210, arginine 266, glycine 288, and glutamine 297; these read ML and HF.

The protein belongs to the ThiI family.

The protein localises to the cytoplasm. It carries out the reaction [ThiI sulfur-carrier protein]-S-sulfanyl-L-cysteine + a uridine in tRNA + 2 reduced [2Fe-2S]-[ferredoxin] + ATP + H(+) = [ThiI sulfur-carrier protein]-L-cysteine + a 4-thiouridine in tRNA + 2 oxidized [2Fe-2S]-[ferredoxin] + AMP + diphosphate. The enzyme catalyses [ThiS sulfur-carrier protein]-C-terminal Gly-Gly-AMP + S-sulfanyl-L-cysteinyl-[cysteine desulfurase] + AH2 = [ThiS sulfur-carrier protein]-C-terminal-Gly-aminoethanethioate + L-cysteinyl-[cysteine desulfurase] + A + AMP + 2 H(+). Its pathway is cofactor biosynthesis; thiamine diphosphate biosynthesis. Functionally, catalyzes the ATP-dependent transfer of a sulfur to tRNA to produce 4-thiouridine in position 8 of tRNAs, which functions as a near-UV photosensor. Also catalyzes the transfer of sulfur to the sulfur carrier protein ThiS, forming ThiS-thiocarboxylate. This is a step in the synthesis of thiazole, in the thiamine biosynthesis pathway. The sulfur is donated as persulfide by IscS. In Lysinibacillus sphaericus (strain C3-41), this protein is Probable tRNA sulfurtransferase.